The primary structure comprises 386 residues: Antilisterial bacteriocin subtilosin biosynthesis protein AlbE (386 aa).

Involved in the production of the bacteriocin subtilosin. This Bacillus subtilis protein is Antilisterial bacteriocin subtilosin biosynthesis protein AlbE (albE).